A 139-amino-acid polypeptide reads, in one-letter code: ATP synthase epsilon chain (139 aa).

The protein belongs to the ATPase epsilon chain family. In terms of assembly, F-type ATPases have 2 components, CF(1) - the catalytic core - and CF(0) - the membrane proton channel. CF(1) has five subunits: alpha(3), beta(3), gamma(1), delta(1), epsilon(1). CF(0) has three main subunits: a, b and c.

The protein localises to the cell inner membrane. Produces ATP from ADP in the presence of a proton gradient across the membrane. The protein is ATP synthase epsilon chain of Haemophilus ducreyi (strain 35000HP / ATCC 700724).